Consider the following 556-residue polypeptide: CBS domain-containing protein CBSCBSPB3 (556 aa).

Composition is skewed to polar residues over residues 1-20 and 30-44; these read MSTQ…NSTV and PVQS…NTSK. A disordered region spans residues 1-63; it reads MSTQATGPSS…SQAPSNGERT (63 aa). Ser-2 carries the post-translational modification N-acetylserine. 4 consecutive CBS domains span residues 68 to 127, 134 to 189, 235 to 294, and 302 to 360; these read RLSK…RPDQ, MTRN…RMEK, ITDN…LSPE, and MTPN…ENSS. Residues 414 to 502 form the PB1 domain; it reads GNSFSFKFED…KVLRLHLDFT (89 aa). A helical transmembrane segment spans residues 527-549; it reads WVSWRGGVVVTGAVVLTSIAIVV.

Its subcellular location is the membrane. The protein is CBS domain-containing protein CBSCBSPB3 (CBSCBSPB3) of Arabidopsis thaliana (Mouse-ear cress).